The following is a 346-amino-acid chain: Methylthioribose-1-phosphate isomerase (346 aa).

Residues 46–48 (RGA), arginine 89, and glutamine 196 contribute to the substrate site. Aspartate 237 serves as the catalytic Proton donor. 247 to 248 (NK) serves as a coordination point for substrate.

This sequence belongs to the eIF-2B alpha/beta/delta subunits family. MtnA subfamily.

It carries out the reaction 5-(methylsulfanyl)-alpha-D-ribose 1-phosphate = 5-(methylsulfanyl)-D-ribulose 1-phosphate. It participates in amino-acid biosynthesis; L-methionine biosynthesis via salvage pathway; L-methionine from S-methyl-5-thio-alpha-D-ribose 1-phosphate: step 1/6. Functionally, catalyzes the interconversion of methylthioribose-1-phosphate (MTR-1-P) into methylthioribulose-1-phosphate (MTRu-1-P). This chain is Methylthioribose-1-phosphate isomerase, found in Trichlorobacter lovleyi (strain ATCC BAA-1151 / DSM 17278 / SZ) (Geobacter lovleyi).